A 115-amino-acid polypeptide reads, in one-letter code: Peptidyl-tRNA hydrolase (115 aa).

This sequence belongs to the PTH2 family.

It localises to the cytoplasm. It catalyses the reaction an N-acyl-L-alpha-aminoacyl-tRNA + H2O = an N-acyl-L-amino acid + a tRNA + H(+). Functionally, the natural substrate for this enzyme may be peptidyl-tRNAs which drop off the ribosome during protein synthesis. The polypeptide is Peptidyl-tRNA hydrolase (Methanosarcina acetivorans (strain ATCC 35395 / DSM 2834 / JCM 12185 / C2A)).